A 314-amino-acid chain; its full sequence is UDP-N-acetylenolpyruvoylglucosamine reductase (314 aa).

The region spanning 31–208 (RIGGPADYYA…LSARFRLTPK (178 aa)) is the FAD-binding PCMH-type domain. Arginine 187 is an active-site residue. Serine 237 functions as the Proton donor in the catalytic mechanism. Residue glutamate 307 is part of the active site.

It belongs to the MurB family. The cofactor is FAD.

It is found in the cytoplasm. It catalyses the reaction UDP-N-acetyl-alpha-D-muramate + NADP(+) = UDP-N-acetyl-3-O-(1-carboxyvinyl)-alpha-D-glucosamine + NADPH + H(+). It functions in the pathway cell wall biogenesis; peptidoglycan biosynthesis. Functionally, cell wall formation. This chain is UDP-N-acetylenolpyruvoylglucosamine reductase, found in Agathobacter rectalis (strain ATCC 33656 / DSM 3377 / JCM 17463 / KCTC 5835 / VPI 0990) (Eubacterium rectale).